Consider the following 515-residue polypeptide: Fibril protein (515 aa).

A Blocked amino end (Met) modification is found at Met-1. Helical regions lie at residues 21-34 (VKKYWWKNCVIQHV), 206-228 (HKFKMYETVNTLKYLLRRLFNLL), 357-376 (KIETVETVANEIAAAIAEKC), and 426-440 (SNEFLKYLNEALKDV).

It is found in the cytoplasm. Its subcellular location is the cytoskeleton. Functionally, acts as a cytoskeletal structure involved in the shape and motility of spiroplasmas. The protein is Fibril protein of Spiroplasma citri.